The chain runs to 138 residues: Basic phospholipase A2 homolog bothropstoxin-II (138 aa).

Residues 1–16 (MRTLWIMAVLLVGVEG) form the signal peptide. Intrachain disulfides connect cysteine 42–cysteine 131, cysteine 44–cysteine 60, cysteine 59–cysteine 111, cysteine 65–cysteine 138, cysteine 66–cysteine 104, cysteine 73–cysteine 97, and cysteine 91–cysteine 102. The segment at 121 to 133 (KRYMAYPDVLCKK) is important for membrane-damaging activities in eukaryotes and bacteria; heparin-binding.

The protein belongs to the phospholipase A2 family. Group II subfamily. D49 sub-subfamily. In terms of assembly, homodimer; non-covalently linked (probable alternative/compact dimer conformation). Expressed by the venom gland.

Its subcellular location is the secreted. In terms of biological role, snake venom phospholipase A2 (PLA2) that shows low enzymatic activity even tough it conserves the catalytic residues. Shows a strong myotoxic activity and induces indirect hemolysis, anticoagulant properties, and cytotoxic activities. In vivo, it induces muscle necrosis, accompanied by polymorphonuclear cell infiltration, and edema in the mouse paw. It exerts its function even in the absence of extracellular calcium, indicating it is not a calcium-dependent enzyme. A model of myotoxic mechanism has been proposed: an apo Lys49-PLA2 is activated by the entrance of a hydrophobic molecule (e.g. fatty acid) at the hydrophobic channel of the protein leading to a reorientation of a monomer. This reorientation causes a transition between 'inactive' to 'active' states, causing alignment of C-terminal and membrane-docking sites (MDoS) side-by-side and putting the membrane-disruption sites (MDiS) in the same plane, exposed to solvent and in a symmetric position for both monomers. The MDoS region stabilizes the toxin on membrane by the interaction of charged residues with phospholipid head groups. Subsequently, the MDiS region destabilizes the membrane with penetration of hydrophobic residues. This insertion causes a disorganization of the membrane, allowing an uncontrolled influx of ions (i.e. calcium and sodium), and eventually triggering irreversible intracellular alterations and cell death. The chain is Basic phospholipase A2 homolog bothropstoxin-II from Bothrops jararacussu (Jararacussu).